We begin with the raw amino-acid sequence, 297 residues long: Phosphate import ATP-binding protein PstB (297 aa).

The region spanning 50–292 (MRLRDVEVFY…PEHDLTEAYI (243 aa)) is the ABC transporter domain. 82-89 (GPSGCGKS) lines the ATP pocket.

This sequence belongs to the ABC transporter superfamily. Phosphate importer (TC 3.A.1.7) family. As to quaternary structure, the complex is composed of two ATP-binding proteins (PstB), two transmembrane proteins (PstC and PstA) and a solute-binding protein (PstS).

The protein resides in the cell inner membrane. The enzyme catalyses phosphate(out) + ATP + H2O = ADP + 2 phosphate(in) + H(+). Functionally, part of the ABC transporter complex PstSACB involved in phosphate import. Responsible for energy coupling to the transport system. In Alcanivorax borkumensis (strain ATCC 700651 / DSM 11573 / NCIMB 13689 / SK2), this protein is Phosphate import ATP-binding protein PstB.